Consider the following 1210-residue polypeptide: V-type proton ATPase 116 kDa subunit a 4 (1210 aa).

Residues 1–715 lie on the Cytoplasmic side of the membrane; the sequence is MSSFSNVGFV…YTIITFPFLF (715 aa). Positions 259 to 271 are enriched in low complexity; the sequence is SSKISFTSSSPSP. The disordered stretch occupies residues 259–292; sequence SSKISFTSSSPSPQRNPKNEAQKNSSSKREETSM. Basic and acidic residues predominate over residues 275-291; it reads PKNEAQKNSSSKREETS. Positions 339 to 405 form a coiled coil; it reads FVKQMRRCEE…EREFLDLNNN (67 aa). A helical transmembrane segment spans residues 716–736; it reads AVMFGDAAHGAILLLAALFFI. The Extracellular portion of the chain corresponds to 737 to 760; sequence RNERKIESKKIRDEIFNTFYGGRY. A helical transmembrane segment spans residues 761–781; sequence IMMLMGIFSIYTGFLYNDAFA. Residues 782 to 855 lie on the Cytoplasmic side of the membrane; the sequence is KSFNVFGSGW…SFLNSMKMKA (74 aa). Residues 856–876 form a helical membrane-spanning segment; the sequence is SVIIGITQMTFGVFLSVLNHI. Residues 877-892 are Extracellular-facing; it reads HFKSYIDIISNFIPQV. A helical transmembrane segment spans residues 893–913; the sequence is IFLSCIFIYLCIQIIVKWIFF. The Cytoplasmic portion of the chain corresponds to 914–976; sequence SVNAENVFGF…WYPNQRLVET (63 aa). Residues 977-997 form a helical membrane-spanning segment; the sequence is ILISISLACIPIMLFGKPLWV. At 998 to 1127 the chain is on the extracellular side; sequence RFVTSKRHKL…NETIAMCLKP (130 aa). N-linked (GlcNAc...) asparagine glycosylation is found at Asn1010, Asn1019, and Asn1118. A helical membrane pass occupies residues 1128–1148; it reads VVACVAFFIFASLSLSILIMM. At 1149–1210 the chain is on the cytoplasmic side; that stretch reads EGLSAFLHAL…DISSGQHLHI (62 aa).

Belongs to the V-ATPase 116 kDa subunit family. V-ATPase is a heteromultimeric enzyme made up of two complexes: the ATP-hydrolytic V1 complex and the proton translocation V0 complex. The V1 complex consists of three catalytic AB heterodimers that form a heterohexamer, three peripheral stalks each consisting of EG heterodimers, one central rotor including subunits D and F, and the regulatory subunits C and H. The proton translocation complex V0 consists of the proton transport subunit a, a ring of proteolipid subunits c9c'', rotary subunit d, subunits e and f, and the accessory subunits vah-19/Ac45 and vah-20/PRR. In terms of tissue distribution, expressed in uterus.

The protein resides in the membrane. In terms of biological role, subunit of the V0 complex of vacuolar(H+)-ATPase (V-ATPase), a multisubunit enzyme composed of a peripheral complex (V1) that hydrolyzes ATP and a membrane integral complex (V0) that translocates protons. V-ATPase is responsible for acidifying and maintaining the pH of intracellular compartments and in some cell types, is targeted to the plasma membrane, where it is responsible for acidifying the extracellular environment. The protein is V-type proton ATPase 116 kDa subunit a 4 of Caenorhabditis elegans.